The sequence spans 423 residues: Pleckstrin homology domain-containing family O member 1 (423 aa).

3 disordered regions span residues 1-21 (MEKN…SAQP), 81-100 (RKSK…AHSR), and 217-277 (LAAG…HSEK). Positions 7 to 20 (AKRGQQDGNQQSAQ) are enriched in polar residues. The region spanning 20–131 (QPEKVGWVRK…WINALNSAIT (112 aa)) is the PH domain. The span at 83–92 (SKSRSKKNHS) shows a compositional bias: basic residues. Residues 222–259 (RRSDSENVKLSEKGRSGTLPRHEVTSWDKPTQRKDSLD) show a composition bias toward basic and acidic residues.

In terms of processing, C-terminal fragments could be released during apoptosis via caspase-3-dependent cleavage.

The protein localises to the membrane. Its subcellular location is the nucleus. The protein resides in the cytoplasm. In terms of biological role, plays a role in the regulation of the actin cytoskeleton through its interactions with actin capping protein (CP). This Gallus gallus (Chicken) protein is Pleckstrin homology domain-containing family O member 1 (PLEKHO1).